The following is a 317-amino-acid chain: Pantothenate kinase (317 aa).

95–102 (GSVAVGKS) provides a ligand contact to ATP.

This sequence belongs to the prokaryotic pantothenate kinase family.

It localises to the cytoplasm. The catalysed reaction is (R)-pantothenate + ATP = (R)-4'-phosphopantothenate + ADP + H(+). Its pathway is cofactor biosynthesis; coenzyme A biosynthesis; CoA from (R)-pantothenate: step 1/5. In Rhodopseudomonas palustris (strain BisB18), this protein is Pantothenate kinase.